The primary structure comprises 210 residues: Urease accessory protein UreE (210 aa).

The disordered stretch occupies residues 144 to 210; that stretch reads PEGGAYAAGG…GHAHPHSLAR (67 aa). The segment covering 156–202 has biased composition (basic and acidic residues); that stretch reads HGHDHPHHDHGHDHAHAHAHGTEACDHEHSHDHDCGHHHDHGQDYGH.

Belongs to the UreE family.

It is found in the cytoplasm. Its function is as follows. Involved in urease metallocenter assembly. Binds nickel. Probably functions as a nickel donor during metallocenter assembly. The chain is Urease accessory protein UreE from Paracidovorax citrulli (strain AAC00-1) (Acidovorax citrulli).